Reading from the N-terminus, the 148-residue chain is Arginine repressor (148 aa).

Belongs to the ArgR family.

It is found in the cytoplasm. It functions in the pathway amino-acid biosynthesis; L-arginine biosynthesis [regulation]. In terms of biological role, regulates arginine biosynthesis genes. This Acidobacterium capsulatum (strain ATCC 51196 / DSM 11244 / BCRC 80197 / JCM 7670 / NBRC 15755 / NCIMB 13165 / 161) protein is Arginine repressor.